Consider the following 182-residue polypeptide: UPF0254 protein MK0012 (182 aa).

Belongs to the UPF0254 family.

The chain is UPF0254 protein MK0012 from Methanopyrus kandleri (strain AV19 / DSM 6324 / JCM 9639 / NBRC 100938).